The chain runs to 682 residues: Potassium-transporting ATPase ATP-binding subunit (682 aa).

4 helical membrane passes run 34 to 54 (PVMFIVWIGSLLTTCISIAMA), 62 to 82 (ALFSAAISGWLWVTVLFANFA), 219 to 239 (IALTILLIALTIVFLLATATL), and 254 to 274 (VLVALLVCLIPTTIGGLLSAI). The active-site 4-aspartylphosphate intermediate is Asp307. Residues Asp344, Glu348, 377–384 (FTAQSRMS), and Lys395 each bind ATP. Mg(2+)-binding residues include Asp518 and Asp522. 3 consecutive transmembrane segments (helical) span residues 588-608 (FAIIPAAFAATYPQLNALNIM), 616-636 (AILSAVIFNALIIVFLIPLAL), and 656-676 (IYGLGGLLVPFIGIKVIDLLL).

It belongs to the cation transport ATPase (P-type) (TC 3.A.3) family. Type IA subfamily. As to quaternary structure, the system is composed of three essential subunits: KdpA, KdpB and KdpC.

Its subcellular location is the cell inner membrane. It carries out the reaction K(+)(out) + ATP + H2O = K(+)(in) + ADP + phosphate + H(+). Functionally, part of the high-affinity ATP-driven potassium transport (or Kdp) system, which catalyzes the hydrolysis of ATP coupled with the electrogenic transport of potassium into the cytoplasm. This subunit is responsible for energy coupling to the transport system and for the release of the potassium ions to the cytoplasm. In Shigella boydii serotype 18 (strain CDC 3083-94 / BS512), this protein is Potassium-transporting ATPase ATP-binding subunit.